Consider the following 590-residue polypeptide: Pentatricopeptide repeat-containing protein At1g63070, mitochondrial (590 aa).

Residues 1-34 (MMRSVAVIGKKCLHRHTVLLKGNPRTTLCWERSF) constitute a mitochondrion transit peptide. 14 PPR repeats span residues 74-108 (SIVE…GISH), 109-143 (NLYT…GYGP), 144-178 (SIVT…GYQP), 179-213 (DTVT…GCQP), 214-248 (DLVT…KIEA), 249-283 (DVVI…GIKP), 284-318 (DVFT…NINP), 319-353 (DLVF…KHCF), 355-389 (DVVA…GLVG), 390-424 (NTVT…GVHP), 425-459 (DIMT…DMKL), 460-494 (DIVT…GVKP), 495-529 (NVVT…GPLP), and 530-564 (NSGT…GFAG).

It belongs to the PPR family. P subfamily.

Its subcellular location is the mitochondrion. The polypeptide is Pentatricopeptide repeat-containing protein At1g63070, mitochondrial (Arabidopsis thaliana (Mouse-ear cress)).